A 658-amino-acid chain; its full sequence is Glycogen debranching enzyme (658 aa).

The Nucleophile role is filled by aspartate 335. Glutamate 370 acts as the Proton donor in catalysis.

The protein belongs to the glycosyl hydrolase 13 family.

It carries out the reaction Hydrolysis of (1-&gt;6)-alpha-D-glucosidic linkages to branches with degrees of polymerization of three or four glucose residues in limit dextrin.. It participates in glycan degradation; glycogen degradation. Its function is as follows. Removes maltotriose and maltotetraose chains that are attached by 1,6-alpha-linkage to the limit dextrin main chain, generating a debranched limit dextrin. The chain is Glycogen debranching enzyme from Erwinia tasmaniensis (strain DSM 17950 / CFBP 7177 / CIP 109463 / NCPPB 4357 / Et1/99).